A 210-amino-acid polypeptide reads, in one-letter code: Large ribosomal subunit protein uL15 (210 aa).

Disordered stretches follow at residues 1–64 (MADD…AAPR) and 76–104 (AAGAKKEKTRVGRGEGSKGKTAGRGTKGT). Positions 9 to 54 (EAAAKPVAEKATATALAKKAPAKAAAADKAAPAAKGETVAAKPAKA) are enriched in low complexity. Basic and acidic residues predominate over residues 79–93 (AKKEKTRVGRGEGSK).

Belongs to the universal ribosomal protein uL15 family. Part of the 50S ribosomal subunit.

In terms of biological role, binds to the 23S rRNA. The chain is Large ribosomal subunit protein uL15 from Leifsonia xyli subsp. xyli (strain CTCB07).